The sequence spans 383 residues: Putative glutamate--cysteine ligase 2-1 (383 aa).

It belongs to the glutamate--cysteine ligase type 2 family. YbdK subfamily.

It carries out the reaction L-cysteine + L-glutamate + ATP = gamma-L-glutamyl-L-cysteine + ADP + phosphate + H(+). Functionally, ATP-dependent carboxylate-amine ligase which exhibits weak glutamate--cysteine ligase activity. The protein is Putative glutamate--cysteine ligase 2-1 of Arthrobacter sp. (strain FB24).